A 117-amino-acid polypeptide reads, in one-letter code: Large ribosomal subunit protein uL22 (117 aa).

This sequence belongs to the universal ribosomal protein uL22 family. As to quaternary structure, part of the 50S ribosomal subunit.

This protein binds specifically to 23S rRNA; its binding is stimulated by other ribosomal proteins, e.g. L4, L17, and L20. It is important during the early stages of 50S assembly. It makes multiple contacts with different domains of the 23S rRNA in the assembled 50S subunit and ribosome. Functionally, the globular domain of the protein is located near the polypeptide exit tunnel on the outside of the subunit, while an extended beta-hairpin is found that lines the wall of the exit tunnel in the center of the 70S ribosome. In Lactobacillus delbrueckii subsp. bulgaricus (strain ATCC 11842 / DSM 20081 / BCRC 10696 / JCM 1002 / NBRC 13953 / NCIMB 11778 / NCTC 12712 / WDCM 00102 / Lb 14), this protein is Large ribosomal subunit protein uL22.